The primary structure comprises 415 residues: Phosphoglycerate kinase (415 aa).

Substrate is bound by residues Asp-24 to Asn-26, Arg-39, His-62 to Arg-65, Arg-121, and Arg-161. Residues Lys-211, Gly-307, Glu-338, and Gly-367 to Ser-370 contribute to the ATP site.

Belongs to the phosphoglycerate kinase family. In terms of assembly, monomer.

Its subcellular location is the cytoplasm. The catalysed reaction is (2R)-3-phosphoglycerate + ATP = (2R)-3-phospho-glyceroyl phosphate + ADP. The protein operates within carbohydrate degradation; glycolysis; pyruvate from D-glyceraldehyde 3-phosphate: step 2/5. In Micrococcus luteus (strain ATCC 4698 / DSM 20030 / JCM 1464 / CCM 169 / CCUG 5858 / IAM 1056 / NBRC 3333 / NCIMB 9278 / NCTC 2665 / VKM Ac-2230) (Micrococcus lysodeikticus), this protein is Phosphoglycerate kinase.